Here is a 147-residue protein sequence, read N- to C-terminus: Calcium-regulated heat stable protein 1 (147 aa).

Positions 1–12 are enriched in pro residues; the sequence is MSSEPPPPPQPP. Residues 1–49 are disordered; sequence MSSEPPPPPQPPTHQTSIGLLDTPRARDRSPSPLRGNVVPSPLPTRRTR. S2 is subject to N-acetylserine. A phosphoserine mark is found at S30, S32, and S41. T45 bears the Phosphothreonine mark. 2 positions are modified to phosphoserine: S52 and S58. In terms of domain architecture, CSD spans 62–129; it reads VYKGVCKCFC…KLQAVEVVIT (68 aa). Residues S146 and S147 each carry the phosphoserine modification.

As to quaternary structure, homodimer. Interacts with STYX. Can be phosphorylated by DYRK2 (in vitro). Dephosphorylated by calcineurin in a Ca(2+) dependent manner, and probably by PP2A or PP4 serine phosphatases in cAMP- and PKC-mediated pathways. Widely expressed.

Its subcellular location is the cytoplasm. It is found in the P-body. The protein resides in the cytoplasmic granule. Its function is as follows. Binds mRNA and regulates the stability of target mRNA. The sequence is that of Calcium-regulated heat stable protein 1 (Carhsp1) from Rattus norvegicus (Rat).